Here is a 305-residue protein sequence, read N- to C-terminus: Lipoyl synthase (305 aa).

[4Fe-4S] cluster-binding residues include Cys-41, Cys-46, Cys-52, Cys-68, Cys-72, Cys-75, and Ser-281. In terms of domain architecture, Radical SAM core spans 54–270 (GARRTATFMI…RKVAMDKGFK (217 aa)). Over residues 283–298 (HADEQVNEAAKEKQRQ) the composition is skewed to basic and acidic residues. The tract at residues 283-305 (HADEQVNEAAKEKQRQGEAQLNS) is disordered.

Belongs to the radical SAM superfamily. Lipoyl synthase family. The cofactor is [4Fe-4S] cluster.

It is found in the cytoplasm. The enzyme catalyses [[Fe-S] cluster scaffold protein carrying a second [4Fe-4S](2+) cluster] + N(6)-octanoyl-L-lysyl-[protein] + 2 oxidized [2Fe-2S]-[ferredoxin] + 2 S-adenosyl-L-methionine + 4 H(+) = [[Fe-S] cluster scaffold protein] + N(6)-[(R)-dihydrolipoyl]-L-lysyl-[protein] + 4 Fe(3+) + 2 hydrogen sulfide + 2 5'-deoxyadenosine + 2 L-methionine + 2 reduced [2Fe-2S]-[ferredoxin]. The protein operates within protein modification; protein lipoylation via endogenous pathway; protein N(6)-(lipoyl)lysine from octanoyl-[acyl-carrier-protein]. Functionally, catalyzes the radical-mediated insertion of two sulfur atoms into the C-6 and C-8 positions of the octanoyl moiety bound to the lipoyl domains of lipoate-dependent enzymes, thereby converting the octanoylated domains into lipoylated derivatives. The sequence is that of Lipoyl synthase from Staphylococcus aureus (strain Mu3 / ATCC 700698).